The following is a 61-amino-acid chain: Small ribosomal subunit protein uS14B (61 aa).

Zn(2+) is bound by residues cysteine 24, cysteine 27, cysteine 40, and cysteine 43.

This sequence belongs to the universal ribosomal protein uS14 family. Zinc-binding uS14 subfamily. In terms of assembly, part of the 30S ribosomal subunit. Contacts proteins S3 and S10. Zn(2+) serves as cofactor.

Its function is as follows. Binds 16S rRNA, required for the assembly of 30S particles and may also be responsible for determining the conformation of the 16S rRNA at the A site. This is Small ribosomal subunit protein uS14B from Rhodococcus jostii (strain RHA1).